A 239-amino-acid polypeptide reads, in one-letter code: tRNA (guanine-N(7)-)-methyltransferase (239 aa).

S-adenosyl-L-methionine contacts are provided by E69, E94, D121, and D144. Residue D144 is part of the active site. Residues K148, D180, and 217–220 each bind substrate; that span reads TKFE.

It belongs to the class I-like SAM-binding methyltransferase superfamily. TrmB family.

It carries out the reaction guanosine(46) in tRNA + S-adenosyl-L-methionine = N(7)-methylguanosine(46) in tRNA + S-adenosyl-L-homocysteine. Its pathway is tRNA modification; N(7)-methylguanine-tRNA biosynthesis. In terms of biological role, catalyzes the formation of N(7)-methylguanine at position 46 (m7G46) in tRNA. In Pseudoalteromonas atlantica (strain T6c / ATCC BAA-1087), this protein is tRNA (guanine-N(7)-)-methyltransferase.